A 523-amino-acid polypeptide reads, in one-letter code: Glycerate kinase (523 aa).

A Phosphoserine modification is found at S60. K200 carries the post-translational modification N6-acetyllysine.

Belongs to the glycerate kinase type-2 family.

Its subcellular location is the cytoplasm. The catalysed reaction is (R)-glycerate + ATP = (2R)-3-phosphoglycerate + ADP + H(+). This chain is Glycerate kinase (GLYCTK), found in Bos taurus (Bovine).